Consider the following 156-residue polypeptide: Aspartate carbamoyltransferase regulatory chain (156 aa).

Residues cysteine 109, cysteine 114, cysteine 140, and cysteine 143 each contribute to the Zn(2+) site.

The protein belongs to the PyrI family. As to quaternary structure, contains catalytic and regulatory chains. It depends on Zn(2+) as a cofactor.

Involved in allosteric regulation of aspartate carbamoyltransferase. This chain is Aspartate carbamoyltransferase regulatory chain, found in Methanosarcina barkeri (strain Fusaro / DSM 804).